We begin with the raw amino-acid sequence, 84 residues long: Large ribosomal subunit protein uL23 (84 aa).

Belongs to the universal ribosomal protein uL23 family. As to quaternary structure, part of the 50S ribosomal subunit. Contacts protein L29.

In terms of biological role, binds to 23S rRNA. One of the proteins that surrounds the polypeptide exit tunnel on the outside of the ribosome. This chain is Large ribosomal subunit protein uL23, found in Haloquadratum walsbyi (strain DSM 16790 / HBSQ001).